Here is an 839-residue protein sequence, read N- to C-terminus: uncharacterized protein (839 aa).

3 disordered regions span residues 504–611 (TVSP…NVVN), 627–646 (KNNN…DNHC), and 682–839 (NHNY…SLGS). A compositionally biased stretch (low complexity) spans 509-611 (GNNNVTGDVD…EGSNNCNVVN (103 aa)). Residues 636–646 (NEYKNSNDNHC) are compositionally biased toward basic and acidic residues. Low complexity-rich tracts occupy residues 689-704 (NGNN…NNNN) and 713-753 (QQQP…NNNK). Positions 726 to 764 (QQSQQQPQLQQKKQQIQEEQQNLNNNNKSIEDDEEAFNS) form a coiled coil. Basic and acidic residues predominate over residues 765 to 776 (DDEHDHEDDSIR). The span at 809 to 823 (EDNDDDSDISDSDSD) shows a compositional bias: acidic residues.

This is an uncharacterized protein from Dictyostelium discoideum (Social amoeba).